Here is a 419-residue protein sequence, read N- to C-terminus: G protein-activated inward rectifier potassium channel 4 (419 aa).

At 1-86 (MAGDSRNAMN…LFTTLVDLKW (86 aa)) the chain is on the cytoplasmic side. S5 is modified (phosphoserine). The helical transmembrane segment at 87–111 (RFNLLVFTMVYTVTWLFFGFIWWLI) threads the bilayer. The Extracellular segment spans residues 112-135 (AYIRGDLDHVGDQEWIPCVENLSG). The helical; Pore-forming intramembrane region spans 136-147 (FVSAFLFSIETE). The pore-forming intramembrane region spans 148-154 (TTIGYGF). The Selectivity filter signature appears at 149–154 (TIGYGF). Residues 155 to 163 (RVITEKCPE) are Extracellular-facing. Residues 164–185 (GIILLLVQAILGSIVNAFMVGC) traverse the membrane as a helical segment. The Cytoplasmic portion of the chain corresponds to 186 to 419 (MFVKISQPKK…GGSREARGSV (234 aa)). The interval 390 to 419 (AEAGLDAEAEQNEEDEPKGLGGSREARGSV) is disordered. The span at 394–405 (LDAEAEQNEEDE) shows a compositional bias: acidic residues.

This sequence belongs to the inward rectifier-type potassium channel (TC 1.A.2.1) family. KCNJ5 subfamily. As to quaternary structure, associates with KCNJ3/GIRK1 to form a G-protein-activated heteromultimer pore-forming unit. The resulting inward current is much larger. Associates with KCNJ6/GIRK2 to form a G-protein-activated heteromultimer pore-forming unit. In terms of tissue distribution, islets, exocrine pancreas and heart. Expressed in the adrenal cortex, particularly the zona glomerulosa.

The protein resides in the membrane. The catalysed reaction is K(+)(in) = K(+)(out). Heteromultimer composed of KCNJ3/GIRK1 and KCNJ5/GIRK4 is activated by phosphatidylinositol 4,5 biphosphate (PtdIns(4,5)P2). Its function is as follows. Inward rectifier potassium channels are characterized by a greater tendency to allow potassium to flow into the cell rather than out of it. Their voltage dependence is regulated by the concentration of extracellular potassium; as external potassium is raised, the voltage range of the channel opening shifts to more positive voltages. The inward rectification is mainly due to the blockage of outward current by internal magnesium. Can be blocked by external barium. This potassium channel is controlled by G proteins. In Homo sapiens (Human), this protein is G protein-activated inward rectifier potassium channel 4 (KCNJ5).